Here is a 351-residue protein sequence, read N- to C-terminus: Autoinducer 2 import system permease protein LsrC (351 aa).

A run of 9 helical transmembrane segments spans residues 14–34, 39–59, 70–90, 93–113, 115–135, 155–175, 213–233, 252–272, and 284–304; these read LLAI…YFSL, MIFS…LVML, ITGL…GLAA, LFAL…VTWL, IPAI…MLLL, ILFS…AMAW, MNGV…GFIP, GISL…AFLL, and LPAW…LVFD.

The protein belongs to the binding-protein-dependent transport system permease family. AraH/RbsC subfamily. In terms of assembly, the complex is composed of two ATP-binding proteins (LsrA), two transmembrane proteins (LsrC and LsrD) and a solute-binding protein (LsrB).

Its subcellular location is the cell inner membrane. In terms of biological role, part of the ABC transporter complex LsrABCD involved in autoinducer 2 (AI-2) import. Probably responsible for the translocation of the substrate across the membrane. The chain is Autoinducer 2 import system permease protein LsrC (lsrC) from Yersinia pseudotuberculosis serotype O:1b (strain IP 31758).